Consider the following 78-residue polypeptide: Gas vesicle protein G (78 aa).

This sequence belongs to the gas vesicle GvpG family.

The protein resides in the gas vesicle. Functionally, might be a minor component of the gas vesicle involved in nucleating their formation. Gas vesicles are hollow, gas filled proteinaceous nanostructures found in some microorganisms. It is not clear what function gas vesicles perform in soil bacteria. The protein is Gas vesicle protein G of Streptomyces sp. (strain CB03234).